We begin with the raw amino-acid sequence, 601 residues long: Glutathione-regulated potassium-efflux system protein KefB (601 aa).

Helical transmembrane passes span 4–24 (SDFL…VPLA), 29–49 (IGAV…GLGF), 55–75 (EILH…GLEL), 87–107 (IFGV…GLLM), 115–135 (AAVV…LQLM), 152–172 (VLLF…LLAG), 177–197 (HFDW…LIGG), 207–227 (FIAA…LVLG), 230–250 (LFMD…GVLL), 268–288 (GLLL…GVLY), 291–311 (LLWV…VLYL), 324–344 (MQFA…FSTA), and 356–376 (ALLL…MKLV). Positions 400 to 519 (KPQVIVVGFG…AGVTQFSRET (120 aa)) constitute an RCK N-terminal domain.

This sequence belongs to the monovalent cation:proton antiporter 2 (CPA2) transporter (TC 2.A.37) family. KefB subfamily. As to quaternary structure, interacts with the regulatory subunit KefG.

Its subcellular location is the cell inner membrane. Its function is as follows. Pore-forming subunit of a potassium efflux system that confers protection against electrophiles. Catalyzes K(+)/H(+) antiport. This is Glutathione-regulated potassium-efflux system protein KefB from Escherichia coli (strain SMS-3-5 / SECEC).